The primary structure comprises 1077 residues: Receptor-type guanylate cyclase daf-11 (1077 aa).

Residues Asn-14, Asn-112, Asn-149, and Asn-311 are each glycosylated (N-linked (GlcNAc...) asparagine). Residues 335–355 (TGVIIAIAVIMGVLLMFIIIL) form a helical membrane-spanning segment. The Protein kinase domain occupies 355 to 695 (LTTIRKCCNG…LARKIIDTVL (341 aa)). Residues 356 to 1077 (TTIRKCCNGS…DSQASTIPDN (722 aa)) lie on the Cytoplasmic side of the membrane. Residues 765–895 (TILYSDIVGF…EAVILASKME (131 aa)) enclose the Guanylate cyclase domain. Mg(2+) contacts are provided by Asp-770, Ile-771, and Asp-814. Positions 983–1034 (KDKMTLAKEKVIAERKNEEERLQRQQTLQEALEEHEEEIEMNEVLVDEDEGE) form a coiled coil. Residues 1048–1077 (TQMEELEDEPAGRTIGHGRLDSQASTIPDN) are disordered.

The protein belongs to the adenylyl cyclase class-4/guanylyl cyclase family. In terms of tissue distribution, expressed in sensory neurons including ASI, ASJ, ASK, AWB and AWC. Expressed in ASJ neurons in the dauer stage.

The protein resides in the cell membrane. It localises to the cell projection. The protein localises to the dendrite. It is found in the cilium. Its subcellular location is the perikaryon. The enzyme catalyses GTP = 3',5'-cyclic GMP + diphosphate. Functionally, guanylate cyclase involved in the production of the second messenger cGMP. In addition, regulates cGMP levels by controlling the transcription of 3',5'-cyclic phosphodiesterase pde-1 and pde-5 mRNAs. Involved in the olfactory, light and pheromone sensing pathways. Part of the chemosensory mechanism of the ASJ sensory neuron that controls dauer formation and dauer recovery. Promotes the calcium flux in ASJ sensory neurons in response to onset and removal of a nitric oxide (NO) stimulus and is thereby required for the behavioral avoidance response to NO-producing organisms like P.aeruginosa. In ASI and ASJ sensory neurons, controls dauer formation and behavioral response to P.aeruginosa by up-regulating the transcription of daf-7, a member of the TGF-beta family. Required for the chemotaxis responses to non-volatile and volatile attractants mediated by the sensory neurons ASE and AWC respectively. Required in ASJ neurons for phototransduction downstream of G protein coupled-photoreceptor lite-1. Plays a role in the development of ASJ sensory neuron axons during late larval stages and in the maintenance of normal axon morphology in adults. Required to maintain the expression of putative olfactory receptor str-2 in one of the two AWC neurons in adults. Regulates, via the production of cGMP, lifespan (in some environmental conditions), sensitivity to oxidative stress and entry into quiescence triggered by satiety. In AWB and AWC sensory neurons, mediates the recognition of food odors which subsequently allows for the detection of preferred food sources. The protein is Receptor-type guanylate cyclase daf-11 of Caenorhabditis elegans.